A 326-amino-acid polypeptide reads, in one-letter code: UDP-3-O-acylglucosamine N-acyltransferase (326 aa).

H225 functions as the Proton acceptor in the catalytic mechanism.

This sequence belongs to the transferase hexapeptide repeat family. LpxD subfamily. As to quaternary structure, homotrimer.

It catalyses the reaction a UDP-3-O-[(3R)-3-hydroxyacyl]-alpha-D-glucosamine + a (3R)-hydroxyacyl-[ACP] = a UDP-2-N,3-O-bis[(3R)-3-hydroxyacyl]-alpha-D-glucosamine + holo-[ACP] + H(+). It participates in bacterial outer membrane biogenesis; LPS lipid A biosynthesis. Functionally, catalyzes the N-acylation of UDP-3-O-acylglucosamine using 3-hydroxyacyl-ACP as the acyl donor. Is involved in the biosynthesis of lipid A, a phosphorylated glycolipid that anchors the lipopolysaccharide to the outer membrane of the cell. This is UDP-3-O-acylglucosamine N-acyltransferase from Acidovorax ebreus (strain TPSY) (Diaphorobacter sp. (strain TPSY)).